Reading from the N-terminus, the 377-residue chain is Geranylgeranyl transferase type-1 subunit beta (377 aa).

PFTB repeat units follow at residues 144–186, 193–234, 245–284, and 291–333; these read KEAC…YMLN, MKKA…CLMG, LNRI…KLLK, and FEKN…SLME. Geranylgeranyl diphosphate is bound by residues 219–221 and 263–266; these read HGG and RPNK. Zn(2+) contacts are provided by aspartate 269 and cysteine 271. 272 to 275 provides a ligand contact to geranylgeranyl diphosphate; that stretch reads YSFW. Residue histidine 321 coordinates Zn(2+).

The protein belongs to the protein prenyltransferase subunit beta family. Heterodimer of FNTA and PGGT1B. PGGT1B mediates interaction with substrate peptides. It depends on Zn(2+) as a cofactor. Requires Mg(2+) as cofactor.

It carries out the reaction geranylgeranyl diphosphate + L-cysteinyl-[protein] = S-geranylgeranyl-L-cysteinyl-[protein] + diphosphate. In terms of biological role, catalyzes the transfer of a geranyl-geranyl moiety from geranyl-geranyl pyrophosphate to a cysteine at the fourth position from the C-terminus of proteins having the C-terminal sequence Cys-aliphatic-aliphatic-X. Known substrates include RAC1, RAC2, RAP1A and RAP1B. This is Geranylgeranyl transferase type-1 subunit beta (PGGT1B) from Homo sapiens (Human).